The chain runs to 167 residues: RNA pyrophosphohydrolase (167 aa).

Positions 7-160 (PYRPCVGVMV…KRRAYEEVVA (154 aa)) constitute a Nudix hydrolase domain. The Nudix box signature appears at 48 to 69 (GGIDEGEDPLEAACRELYEETG).

This sequence belongs to the Nudix hydrolase family. RppH subfamily. The cofactor is a divalent metal cation.

In terms of biological role, accelerates the degradation of transcripts by removing pyrophosphate from the 5'-end of triphosphorylated RNA, leading to a more labile monophosphorylated state that can stimulate subsequent ribonuclease cleavage. This Rhizobium meliloti (strain 1021) (Ensifer meliloti) protein is RNA pyrophosphohydrolase.